The chain runs to 689 residues: Glycine--tRNA ligase beta subunit (689 aa).

The protein belongs to the class-II aminoacyl-tRNA synthetase family. As to quaternary structure, tetramer of two alpha and two beta subunits.

It localises to the cytoplasm. It catalyses the reaction tRNA(Gly) + glycine + ATP = glycyl-tRNA(Gly) + AMP + diphosphate. The sequence is that of Glycine--tRNA ligase beta subunit from Aeromonas hydrophila subsp. hydrophila (strain ATCC 7966 / DSM 30187 / BCRC 13018 / CCUG 14551 / JCM 1027 / KCTC 2358 / NCIMB 9240 / NCTC 8049).